Reading from the N-terminus, the 539-residue chain is Probable malate:quinone oxidoreductase (539 aa).

The protein belongs to the MQO family. FAD is required as a cofactor.

It carries out the reaction (S)-malate + a quinone = a quinol + oxaloacetate. Its pathway is carbohydrate metabolism; tricarboxylic acid cycle; oxaloacetate from (S)-malate (quinone route): step 1/1. This chain is Probable malate:quinone oxidoreductase, found in Sodalis glossinidius (strain morsitans).